The sequence spans 20 residues: Cytochrome P450-RR1 (20 aa).

Belongs to the cytochrome P450 family. Heme is required as a cofactor.

Its function is as follows. P450-RRI catalyzes the O-dealkylation of 2-ethoxyphenol and 2-methoxyphenol to produce catechol. The cytochrome binds other ortho-substituted phenols, including 2-ethoxyphenol, 2-methylphenol and 2-chlorophenol. The polypeptide is Cytochrome P450-RR1 (Rhodococcus rhodochrous).